We begin with the raw amino-acid sequence, 419 residues long: Appendage-associated protein (419 aa).

The N-terminal stretch at 1-39 is a signal peptide; the sequence is MIVTYGTVGCPVSRGGSPGCGRRIAEELRLAEDARLRLA. Positions 232-262 form a coiled coil; the sequence is ERQKAQRRREERAAKAREELRKELNDIDAKW.

It localises to the secreted. Associates with actin filament appendages that are formed in the inclusion appendages of the parasitophorous vacuole during infection of the host erythrocyte. The sequence is that of Appendage-associated protein from Anaplasma marginale (strain St. Maries).